Reading from the N-terminus, the 457-residue chain is Polygalacturonase-2 (457 aa).

The first 24 residues, 1-24 (MVIQRNSILLLIIIFASSISTCRS), serve as a signal peptide directing secretion. Positions 25-71 (NVIDDNLFKQVYDNILEQEFAHDFQAYLSYLSKNIESNNNIDKVDKN) are excised as a propeptide. Residues N189 and N240 are each glycosylated (N-linked (GlcNAc...) asparagine). 2 PbH1 repeats span residues 228–255 (SCTNVVASNLMINASAKSPNTDGVHVSN) and 256–277 (TQYIQISDTIIGTGDDCISIVS). D270 serves as the catalytic Proton donor. N-linked (GlcNAc...) asparagine glycosylation is present at N286. H293 is a catalytic residue. PbH1 repeat units lie at residues 309 to 330 (VSNVTVNEAKIIGAENGVRIKT) and 338 to 359 (ASNIKFLNVEMQDVKYPIIIDQ). An N-linked (GlcNAc...) asparagine glycan is attached at N311. Residues 445 to 457 (LEISEDEALLYNY) constitute a propeptide that is removed on maturation.

This sequence belongs to the glycosyl hydrolase 28 family. Monomer PG2 (isoenzymes PG2A and PG2B). Also forms heterodimers called polygalacturonase 1 (PG1) with the beta subunit GP1. N-glycosylated. PG2B isozyme has a greater degree of glycosylation than PG2A. As to expression, expressed only in ripening fruits (at protein level).

Its subcellular location is the secreted. The protein localises to the extracellular space. It is found in the apoplast. The protein resides in the cell wall. The enzyme catalyses (1,4-alpha-D-galacturonosyl)n+m + H2O = (1,4-alpha-D-galacturonosyl)n + (1,4-alpha-D-galacturonosyl)m.. Catalytic subunit of the polygalacturonase isozyme 1 and 2 (PG1 and PG2). Acts in concert with the pectinesterase, in the ripening process. Is involved in cell wall metabolism, specifically in polyuronide degradation. The depolymerization and solubilization of cell wall polyuronides mediated by PG2 during ripening seems to be limited by the beta subunit GP1, probably by recruiting PG2 to form PG1. In Solanum lycopersicum (Tomato), this protein is Polygalacturonase-2 (PG2).